The chain runs to 494 residues: Guanosine-5'-triphosphate,3'-diphosphate pyrophosphatase (494 aa).

This sequence belongs to the GppA/Ppx family. GppA subfamily.

The catalysed reaction is guanosine 3'-diphosphate 5'-triphosphate + H2O = guanosine 3',5'-bis(diphosphate) + phosphate + H(+). Its pathway is purine metabolism; ppGpp biosynthesis; ppGpp from GTP: step 2/2. Catalyzes the conversion of pppGpp to ppGpp. Guanosine pentaphosphate (pppGpp) is a cytoplasmic signaling molecule which together with ppGpp controls the 'stringent response', an adaptive process that allows bacteria to respond to amino acid starvation, resulting in the coordinated regulation of numerous cellular activities. In Escherichia coli (strain 55989 / EAEC), this protein is Guanosine-5'-triphosphate,3'-diphosphate pyrophosphatase.